Here is a 69-residue protein sequence, read N- to C-terminus: Cold shock-like protein CspE (69 aa).

In terms of domain architecture, CSD spans 6 to 66; it reads GNVKWFNESK…GAKGPSAANV (61 aa).

Its subcellular location is the cytoplasm. The sequence is that of Cold shock-like protein CspE (cspE) from Escherichia coli O6:H1 (strain CFT073 / ATCC 700928 / UPEC).